The following is a 424-amino-acid chain: Multifunctional CCA protein (424 aa).

The ATP site is built by G8 and R11. CTP-binding residues include G8 and R11. Residues D21 and D23 each coordinate Mg(2+). 3 residues coordinate ATP: R91, R149, and R152. CTP contacts are provided by R91, R149, and R152. Residues 238 to 339 (TGIHLMMVLD…VRLLERCDAF (102 aa)) enclose the HD domain.

This sequence belongs to the tRNA nucleotidyltransferase/poly(A) polymerase family. Bacterial CCA-adding enzyme type 1 subfamily. As to quaternary structure, monomer. Can also form homodimers and oligomers. Mg(2+) serves as cofactor. It depends on Ni(2+) as a cofactor.

The enzyme catalyses a tRNA precursor + 2 CTP + ATP = a tRNA with a 3' CCA end + 3 diphosphate. It catalyses the reaction a tRNA with a 3' CCA end + 2 CTP + ATP = a tRNA with a 3' CCACCA end + 3 diphosphate. Its function is as follows. Catalyzes the addition and repair of the essential 3'-terminal CCA sequence in tRNAs without using a nucleic acid template. Adds these three nucleotides in the order of C, C, and A to the tRNA nucleotide-73, using CTP and ATP as substrates and producing inorganic pyrophosphate. tRNA 3'-terminal CCA addition is required both for tRNA processing and repair. Also involved in tRNA surveillance by mediating tandem CCA addition to generate a CCACCA at the 3' terminus of unstable tRNAs. While stable tRNAs receive only 3'-terminal CCA, unstable tRNAs are marked with CCACCA and rapidly degraded. In Polaromonas naphthalenivorans (strain CJ2), this protein is Multifunctional CCA protein.